The chain runs to 117 residues: Immunity protein BC_0921 (117 aa).

Probably interacts with cognate toxin BC_0920 but not with other non-cognate toxins. The interaction inhibits the toxic activity of BC_0920.

Its subcellular location is the cytoplasm. Immunity component of an LXG toxin-immunity module. Neutralizes the RNase activity of cognate toxin BC_0920. Probably does not have immunity protein activity on other toxins with the LXG domain. The chain is Immunity protein BC_0921 from Bacillus cereus (strain ATCC 14579 / DSM 31 / CCUG 7414 / JCM 2152 / NBRC 15305 / NCIMB 9373 / NCTC 2599 / NRRL B-3711).